We begin with the raw amino-acid sequence, 510 residues long: Cytochrome P450 monooxygenase BOT1 (510 aa).

Residues 16–36 form a helical membrane-spanning segment; the sequence is PLAWAALILASFTLYSVQLVV. Cys454 serves as a coordination point for heme. Residue Asn476 is glycosylated (N-linked (GlcNAc...) asparagine).

This sequence belongs to the cytochrome P450 family. The cofactor is heme.

Its subcellular location is the membrane. Its pathway is secondary metabolite biosynthesis. Its function is as follows. Cytochrome P450 monooxygenase; part of the gene cluster that mediates the biosynthesis of botrydial. Botrydial is necessary for colonization of plant tissue by the T4 strain. It is a strain-dependent virulence factor since highly aggressive strains like SAS56 or B05 still retain substantial virulence when botrydial synthesis is impaired, since they produce also botcinic acid. The first step of botrydial biosynthesis is performed by the sesquiterpene synthase BOT2 which catalyzes the cyclization of farnesyl diphosphate (FPP) to presilphiperfolan-8-beta-ol (PSP). The cytochrome P450 monooxygenase BOT4 then catalyzes the hydroxylation at C-4 to give a probotryane intermediate. Acetylation of the hydroxyl at C-4 is carried out by the acetyltransferase BOT5, followed by the combined action of the P450 monooxygenases BOT3 and BOT1, to yield finally the glycol, via the regio- and stereospecific hydroxylations at C-10 and C-15 of the probotryane intermediates, respectively. The cleavage of the C10-C15 bond of probotryane skeleton is an intriguing and chemically important reaction, which could be mediated by some of the monooxygenases or by a combination of them. It is possible that either BOT3 or BOT1 would oxidize either the 10- or the 15-hydroxy group to the hydroperoxide derivative, which would then undergo heterolytic fragmentation to give the dialdehyde botrydial. Finally, the dehydrogenase BOT7 might be involved in the conversion of botrydial to dihydrobotrydial. This Botryotinia fuckeliana (Noble rot fungus) protein is Cytochrome P450 monooxygenase BOT1.